A 258-amino-acid chain; its full sequence is MIVLPRRLSDEVADRVRALIDEKNLEAGMKLPAERQLAMQLGVSRNSLREALAKLVSEGVLLSRRGGGTFIRWRHDTWSEQNIVQPLKTLMADDPDYSFDILEARYAIEASTAWHAAMRATPGDKEKIQLCFEATLSEDPDIASQADVRFHLAIAEASHNIVLLQTMRGFFDVLQSSVKHSRQRMYLVPPVFSQLTEQHQAVIDAIFAGDADGARKAMMAHLSFVHTTMKRFDEDQARHARITRLPGEHNEHSREKNA.

Residues 6-74 (RRLSDEVADR…RGGGTFIRWR (69 aa)) enclose the HTH gntR-type domain. A DNA-binding region (H-T-H motif) is located at residues 34–53 (ERQLAMQLGVSRNSLREALA).

Its function is as follows. May be a regulatory protein for the LCT genes. This chain is Putative L-lactate dehydrogenase operon regulatory protein (lldR), found in Escherichia coli (strain K12).